The sequence spans 154 residues: Transcriptional repressor NrdR (154 aa).

A zinc finger spans residues 3 to 34; it reads CPFCRHPDSRVVDSREADEGQAIRRRRSCPEC. The ATP-cone domain maps to 46–136; sequence LSVVKRSGVT…VYRSFSSAED (91 aa).

The protein belongs to the NrdR family. Zn(2+) serves as cofactor.

In terms of biological role, negatively regulates transcription of bacterial ribonucleotide reductase nrd genes and operons by binding to NrdR-boxes. This Rhodococcus jostii (strain RHA1) protein is Transcriptional repressor NrdR.